The sequence spans 201 residues: MADILLLDNIDSFTYNLADQLRSNGHNVVIYRNHIPAQTLIERLATMSNPVLMLSPGPGVPSEAGCMPELLTRLSGKLPIIGICLGHQAIVEAYGGYVGQAGEILHGKASSIEHDGQAMFAGLTNPLPVARYHSLVGSNIPAGLTINAHFNGMVMAVRHDADRICGFQFHPESILTTQGARLLEQTLAWAQRKLEPTNTLQ.

Residues 3–196 enclose the Glutamine amidotransferase type-1 domain; sequence DILLLDNIDS…LAWAQRKLEP (194 aa). 57-59 contributes to the L-glutamine binding site; it reads GPG. C84 serves as the catalytic Nucleophile; for GATase activity. Residues Q88 and 134-135 contribute to the L-glutamine site; that span reads SL. Catalysis depends on for GATase activity residues H170 and E172.

Tetramer of two components I and two components II.

It carries out the reaction chorismate + L-glutamine = anthranilate + pyruvate + L-glutamate + H(+). The enzyme catalyses N-(5-phospho-beta-D-ribosyl)anthranilate + diphosphate = 5-phospho-alpha-D-ribose 1-diphosphate + anthranilate. The protein operates within amino-acid biosynthesis; L-tryptophan biosynthesis; L-tryptophan from chorismate: step 1/5. It participates in amino-acid biosynthesis; L-tryptophan biosynthesis; L-tryptophan from chorismate: step 2/5. The chain is Anthranilate synthase component II (trpG-TRPD) from Shigella dysenteriae.